We begin with the raw amino-acid sequence, 186 residues long: UPF0340 protein SZO_02480 (186 aa).

The protein belongs to the UPF0340 family.

This Streptococcus equi subsp. zooepidemicus (strain H70) protein is UPF0340 protein SZO_02480.